Here is a 151-residue protein sequence, read N- to C-terminus: UPAR/Ly6 domain-containing protein rtv (151 aa).

A signal peptide spans 1 to 19 (MQFTSLLLAVIFLISLVSI). Residues 20-125 (DGLLRRCYQC…QGDLCNGARS (106 aa)) are Extracellular-facing. Intrachain disulfides connect Cys26–Cys65, Cys29–Cys38, Cys60–Cys88, Cys100–Cys113, and Cys115–Cys120. An N-linked (GlcNAc...) asparagine glycan is attached at Asn45. Residue Asn121 is the site of GPI-anchor amidated asparagine attachment. Positions 122-151 (GARSWSSAPQMILITMLPLLGSWLLQRMRN) are cleaved as a propeptide — removed in mature form. The helical transmembrane segment at 126-146 (WSSAPQMILITMLPLLGSWLL) threads the bilayer. Over 147-151 (QRMRN) the chain is Cytoplasmic.

This sequence belongs to the quiver family.

It is found in the cell membrane. In terms of biological role, required for chitin fiber assembly and organization involved in cuticle formation and tracheal development. This is UPAR/Ly6 domain-containing protein rtv from Drosophila melanogaster (Fruit fly).